The sequence spans 157 residues: Large ribosomal subunit protein uL22 (157 aa).

The protein belongs to the universal ribosomal protein uL22 family. In terms of assembly, part of the 50S ribosomal subunit.

Its function is as follows. This protein binds specifically to 23S rRNA. It makes multiple contacts with different domains of the 23S rRNA in the assembled 50S subunit and ribosome. Functionally, the globular domain of the protein is located near the polypeptide exit tunnel on the outside of the subunit, while an extended beta-hairpin is found that lines the wall of the exit tunnel in the center of the 70S ribosome. The chain is Large ribosomal subunit protein uL22 from Methanocorpusculum labreanum (strain ATCC 43576 / DSM 4855 / Z).